The chain runs to 705 residues: Probable glutamate carboxypeptidase AMP1 (705 aa).

Over 1–24 (MSQPLTTRPTVTGISIIPFRQPPP) the chain is Cytoplasmic. Residues 25 to 42 (LCSFLFVIVLFVATFYTL) traverse the membrane as a helical; Signal-anchor for type II membrane protein segment. The Extracellular portion of the chain corresponds to 43 to 705 (HHPDAVTPPL…ASKALKGGFT (663 aa)). Asparagine 74, asparagine 137, and asparagine 322 each carry an N-linked (GlcNAc...) asparagine glycan. The segment at 255–548 (GVVGGEKLSL…GIWGLLGILL (294 aa)) is catalytic. 2 residues coordinate Zn(2+): histidine 356 and aspartate 366. Catalysis depends on glutamate 403, which acts as the Nucleophile. 3 residues coordinate Zn(2+): glutamate 404, aspartate 432, and histidine 514. An N-linked (GlcNAc...) asparagine glycan is attached at asparagine 676.

Belongs to the peptidase M28 family. M28B subfamily. Zn(2+) is required as a cofactor. As to expression, expressed in all plant parts. Highest levels in the bolt stem, inflorescence, root and silique. Low level in leaves.

The protein resides in the endoplasmic reticulum membrane. It catalyses the reaction Release of an unsubstituted, C-terminal glutamyl residue, typically from Ac-Asp-Glu or folylpoly-gamma-glutamates.. In terms of biological role, may modulate the level of one or more small signaling molecules that have a role in regulating meristem function. May play a role in balancing and restricting the meristem-promoting activity of auxin signaling. Involved in ethylene and giberellin (GA) signaling pathways or in a parallel pathway controlling cell and hypocotyl elongation and cellular organization. Involved in abscisic acid (ABA) signaling pathway. Plays a negative role in ABA-mediated seed germination and seedling development. Acts in association with LAMP1 to suppress ectopic stem cell niche formation in the shoot apical meristem (SAM) independently of cytokinin signaling pathway. Modulates responses to ABA, oxidative stress and abotic stress. Acts as a negative regulator of the ABA signaling pathway to modulate freezing and drought stress responses. Mediates carbon and amino acid metabolism. May be involved in the acquisition and/or maintenance of seed dormancy. Involved in the regulation of response to heat shock and plant defense. The sequence is that of Probable glutamate carboxypeptidase AMP1 from Arabidopsis thaliana (Mouse-ear cress).